Here is a 141-residue protein sequence, read N- to C-terminus: Hemoglobin subunit alpha (141 aa).

Positions 1-141 (VLSPEDKNHV…VSTVLTSKYR (141 aa)) constitute a Globin domain. S3 is modified (phosphoserine). Residue K7 is modified to N6-succinyllysine. At K16 the chain carries N6-acetyllysine; alternate. K16 carries the post-translational modification N6-succinyllysine; alternate. Y24 carries the phosphotyrosine modification. Phosphoserine is present on S35. K40 carries the N6-succinyllysine modification. S49 carries the post-translational modification Phosphoserine. H58 contributes to the O2 binding site. Heme b is bound at residue H87. Position 102 is a phosphoserine (S102). At T108 the chain carries Phosphothreonine. Phosphoserine is present on residues S124 and S131. Phosphothreonine is present on residues T134 and T137. The residue at position 138 (S138) is a Phosphoserine.

The protein belongs to the globin family. As to quaternary structure, heterotetramer of two alpha chains and two beta chains. As to expression, red blood cells.

Its function is as follows. Involved in oxygen transport from the lung to the various peripheral tissues. Functionally, hemopressin acts as an antagonist peptide of the cannabinoid receptor CNR1. Hemopressin-binding efficiently blocks cannabinoid receptor CNR1 and subsequent signaling. This chain is Hemoglobin subunit alpha (HBA), found in Spalax ehrenbergi (Middle East blind mole rat).